The primary structure comprises 284 residues: MSMNSSTEISQEPSIMKPVSSISSFVFNAGFLQGTFSDTTLIIKGETYHLHALFLGRSPVLLQKLIENNPKGDVHYTIEVETEDPYVTKESCLFVLSTLYCDSPRIPAEVNVCSVLAVSDLLGLDTLAFEASSLIEKSIRPETMESVIRFLDPNFEGLERLKMGMYPRFTSGLFNKAIQVMYNTLVSNWNTEYARLLCNLPFEVIKDLLESDKLTVGASSMARYKLANEIVKMRASFRKQNHIEGKGDESVVLAFDEGSRGIQLVHIAPGAESRRKIWKATSVR.

The BTB domain maps to 37–108 (SDTTLIIKGE…LYCDSPRIPA (72 aa)).

Interacts with cul3.

It localises to the cytoplasm. It is found in the nucleus. The protein operates within protein modification; protein ubiquitination. Probable substrate-specific adapter of an E3 ubiquitin-protein ligase complex which mediates the ubiquitination and subsequent proteasomal degradation of target proteins. The sequence is that of BTB/POZ domain-containing protein 2 (btb2) from Schizosaccharomyces pombe (strain 972 / ATCC 24843) (Fission yeast).